The primary structure comprises 157 residues: Transcription elongation factor GreA (157 aa).

A coiled-coil region spans residues 1–75 (MSKEIILTQE…VETLINRAKV (75 aa)).

Belongs to the GreA/GreB family.

Functionally, necessary for efficient RNA polymerase transcription elongation past template-encoded arresting sites. The arresting sites in DNA have the property of trapping a certain fraction of elongating RNA polymerases that pass through, resulting in locked ternary complexes. Cleavage of the nascent transcript by cleavage factors such as GreA or GreB allows the resumption of elongation from the new 3'terminus. GreA releases sequences of 2 to 3 nucleotides. This is Transcription elongation factor GreA from Mycoplasma capricolum subsp. capricolum (strain California kid / ATCC 27343 / NCTC 10154).